A 311-amino-acid chain; its full sequence is Aspartate carbamoyltransferase catalytic subunit (311 aa).

Residues Arg55 and Thr56 each contribute to the carbamoyl phosphate site. An L-aspartate-binding site is contributed by Lys85. The carbamoyl phosphate site is built by Arg106, His135, and Gln138. L-aspartate-binding residues include Arg168 and Arg230. Carbamoyl phosphate-binding residues include Leu268 and Pro269.

Belongs to the aspartate/ornithine carbamoyltransferase superfamily. ATCase family. In terms of assembly, heterododecamer (2C3:3R2) of six catalytic PyrB chains organized as two trimers (C3), and six regulatory PyrI chains organized as three dimers (R2).

It carries out the reaction carbamoyl phosphate + L-aspartate = N-carbamoyl-L-aspartate + phosphate + H(+). It participates in pyrimidine metabolism; UMP biosynthesis via de novo pathway; (S)-dihydroorotate from bicarbonate: step 2/3. Functionally, catalyzes the condensation of carbamoyl phosphate and aspartate to form carbamoyl aspartate and inorganic phosphate, the committed step in the de novo pyrimidine nucleotide biosynthesis pathway. The chain is Aspartate carbamoyltransferase catalytic subunit from Escherichia coli (strain 55989 / EAEC).